The primary structure comprises 466 residues: Aladin (466 aa).

WD repeat units lie at residues 135-174 (WLNS…TTAT), 179-218 (PSQT…HLGR), 229-269 (PNNL…MQPL), 271-310 (RLGP…TTER), and 378-418 (LVGG…FDLQ).

The protein localises to the nucleus. It is found in the nuclear pore complex. The protein resides in the cytoplasm. It localises to the cytoskeleton. Its subcellular location is the spindle. Involved in mitotic spindle assembly. The polypeptide is Aladin (Drosophila melanogaster (Fruit fly)).